Here is a 476-residue protein sequence, read N- to C-terminus: Amino acid permease 3 (476 aa).

The Cytoplasmic portion of the chain corresponds to 1–33 (MVQNHQTVLAVDMPQTGGSKYLDDDGKNKRTGS). The chain crosses the membrane as a helical span at residues 34–54 (VWTASAHIITAVIGSGVLSLA). Residues 55-57 (WAT) are Extracellular-facing. A helical membrane pass occupies residues 58–78 (AQLGWLAGPVVMLLFSAVTYF). Residues 79–122 (TSSLLAACYRSGDPISGKRNYTYMDAVRSNLGGVKVTLCGIVQY) are Cytoplasmic-facing. A helical membrane pass occupies residues 123-143 (LNIFGVAIGYTIASAISMMAI). The Extracellular portion of the chain corresponds to 144 to 166 (KRSNCFHKSGGKDPCHMNSNPYM). Transmembrane regions (helical) follow at residues 167–187 (IAFG…QLWW) and 188–208 (LSIL…ALGI). At 209 to 277 (AQVVVNGKVK…EEKTMKKATL (69 aa)) the chain is on the extracellular side. The helical transmembrane segment at 278–298 (VSVSVTTMFYMLCGCMGYAAF) threads the bilayer. Residues 299-300 (GD) are Cytoplasmic-facing. Residues 301-321 (LSPGNLLTGFGFYNPYWLLDI) form a helical membrane-spanning segment. At 322–324 (ANA) the chain is on the extracellular side. The helical transmembrane segment at 325 to 345 (AIVIHLIGAYQVYCQPLFAFI) threads the bilayer. Topologically, residues 346–384 (EKQASIQFPDSEFIAKDIKIPIPGFKPLRLNVFRLIWRT) are cytoplasmic. 2 helical membrane passes run 385-405 (VFVI…DVVG) and 406-426 (LLGA…MYIA). Topologically, residues 427–441 (QKKIPRWSTRWVCLQ) are cytoplasmic. The chain crosses the membrane as a helical span at residues 442 to 462 (VFSLGCLVVSIAAAAGSIAGV). Residues 463 to 476 (LLDLKSYKPFRSEY) are Extracellular-facing.

It belongs to the amino acid/polyamine transporter 2 family. Amino acid/auxin permease (AAAP) (TC 2.A.18.2) subfamily. Expressed in the root phloem. Detected in stamens, in cotyledons, and in major veins of mature leaves.

It localises to the cell membrane. The protein localises to the nucleus membrane. Its subcellular location is the endomembrane system. Inhibited by carbonylcyanide m-chlorophenylhydrazone and 2,4-dinitrophenol. Its function is as follows. Amino acid-proton symporter. Stereospecific transporter with a broad specificity for GABA, tryptophan and both neutral and basic amino acids. High affinity transport of cationic amino acids. This is Amino acid permease 3 (AAP3) from Arabidopsis thaliana (Mouse-ear cress).